Here is a 146-residue protein sequence, read N- to C-terminus: Transcription initiation factor TFIID subunit 10b (146 aa).

The disordered stretch occupies residues 16 to 43 (GASSHGQSSGGGGGGDRDRTTPSSHLSD).

It belongs to the TAF10 family. In terms of assembly, belongs to the TFIID complex which is composed of TATA binding protein (Tbp) and a number of TBP-associated factors (TAFs). The N-terminus interacts with the histone fold of Taf8. In terms of tissue distribution, at embryonic stage 9, expression is seen in the mesodermal layer and midgut primordia. The mesoderm-specific expression persists in later stages of development and at its highest level is detected in midgut, hindgut, and differentiating somatic muscle fibers. Coexpressed with Taf10 in the lateral epidermis and anal plate.

Its subcellular location is the cytoplasm. The protein localises to the nucleus. Functionally, TFIID is a multimeric protein complex that plays a central role in mediating promoter responses to various activators and repressors. In Drosophila melanogaster (Fruit fly), this protein is Transcription initiation factor TFIID subunit 10b.